We begin with the raw amino-acid sequence, 142 residues long: Large ribosomal subunit protein uL11 (142 aa).

The protein belongs to the universal ribosomal protein uL11 family. In terms of assembly, part of the ribosomal stalk of the 50S ribosomal subunit. Interacts with L10 and the large rRNA to form the base of the stalk. L10 forms an elongated spine to which L12 dimers bind in a sequential fashion forming a multimeric L10(L12)X complex. One or more lysine residues are methylated.

In terms of biological role, forms part of the ribosomal stalk which helps the ribosome interact with GTP-bound translation factors. This Methylocella silvestris (strain DSM 15510 / CIP 108128 / LMG 27833 / NCIMB 13906 / BL2) protein is Large ribosomal subunit protein uL11.